Consider the following 389-residue polypeptide: S-adenosylmethionine synthase (389 aa).

His-17 contributes to the ATP binding site. Asp-19 contacts Mg(2+). Position 45 (Glu-45) interacts with K(+). L-methionine-binding residues include Glu-58 and Gln-101. Residues Gln-101 to Glu-111 are flexible loop. ATP-binding positions include Asp-168–Lys-170, Arg-234–Phe-235, Asp-243, Arg-249–Lys-250, Ala-266, and Lys-270. Residue Asp-243 coordinates L-methionine. L-methionine is bound at residue Lys-274.

This sequence belongs to the AdoMet synthase family. In terms of assembly, homotetramer; dimer of dimers. Requires Mg(2+) as cofactor. It depends on K(+) as a cofactor.

The protein resides in the cytoplasm. It carries out the reaction L-methionine + ATP + H2O = S-adenosyl-L-methionine + phosphate + diphosphate. It participates in amino-acid biosynthesis; S-adenosyl-L-methionine biosynthesis; S-adenosyl-L-methionine from L-methionine: step 1/1. In terms of biological role, catalyzes the formation of S-adenosylmethionine (AdoMet) from methionine and ATP. The overall synthetic reaction is composed of two sequential steps, AdoMet formation and the subsequent tripolyphosphate hydrolysis which occurs prior to release of AdoMet from the enzyme. The protein is S-adenosylmethionine synthase of Geobacter sulfurreducens (strain ATCC 51573 / DSM 12127 / PCA).